A 403-amino-acid polypeptide reads, in one-letter code: Double C2-like domain-containing protein alpha (403 aa).

The interaction with UNC13D and DYNLT1 stretch occupies residues 1-92 (MRGRRGDRMT…DSYDSDDTTA (92 aa)). 2 consecutive C2 domains span residues 92 to 214 (ALGT…HFNI) and 254 to 387 (ERGR…ERWH). Asp123, Asp129, Asp184, Asp186, Asp285, Asp291, Asp345, Asp347, and Asp353 together coordinate Ca(2+). Residues 218 to 403 (RQVPLPSPSS…PPAAGALPLA (186 aa)) are interaction with UNC13D.

In terms of assembly, interacts (via N-terminus) with UNC13A. Interacts with cytoplasmic dynein light chain DYNLT1. Interacts with UNC13D. The cofactor is Ca(2+). Predominantly expressed in brain. Also found in non-neural tissues. Expressed in RBL-2H3 mast cell line.

Its subcellular location is the cytoplasmic vesicle. It localises to the secretory vesicle. It is found in the synaptic vesicle membrane. The protein localises to the synapse. The protein resides in the synaptosome. Its subcellular location is the lysosome. In terms of biological role, calcium sensor which most probably regulates fusion of vesicles with membranes. Binds calcium and phospholipids. May be involved in calcium dependent neurotransmitter release through the interaction with UNC13A. May be involved in calcium-dependent spontaneous release of neurotransmitter in absence of action potentials in neuronal cells. Regulates Ca(2+)-dependent secretory lysosome exocytosis in mast cells. This Rattus norvegicus (Rat) protein is Double C2-like domain-containing protein alpha (Doc2a).